Reading from the N-terminus, the 72-residue chain is Antitoxin VapB11 (72 aa).

In terms of biological role, antitoxin component of a type II toxin-antitoxin (TA) system. In Mycobacterium tuberculosis (strain CDC 1551 / Oshkosh), this protein is Antitoxin VapB11 (vapB11).